Here is a 447-residue protein sequence, read N- to C-terminus: Cytochrome P450 BJ-4 homolog (447 aa).

C392 contributes to the heme binding site.

This sequence belongs to the cytochrome P450 family. The cofactor is heme.

Functionally, cytochromes P450 are a group of heme-thiolate monooxygenases. They oxidize a variety of structurally unrelated compounds, including steroids, fatty acids, and xenobiotics. This chain is Cytochrome P450 BJ-4 homolog (cyp117A2), found in Sinorhizobium fredii (strain NBRC 101917 / NGR234).